Reading from the N-terminus, the 527-residue chain is Amine oxidase [flavin-containing] A (527 aa).

The residue at position 1 (Met1) is an N-acetylmethionine. The Cytoplasmic portion of the chain corresponds to 1–497 (MASREKTSIE…HTFWERNLPS (497 aa)). Ser383 carries the post-translational modification Phosphoserine. Cys406 is modified (S-8alpha-FAD cysteine). Residues 498–518 (VTGLLKLIGFTTSVTALWIVA) form a helical; Anchor for type IV membrane protein membrane-spanning segment. Residues 519–527 (YKFRLLRRS) are Mitochondrial intermembrane-facing. Residues 520-522 (KFR) form an interaction with membrane phospholipid headgroups region.

The protein belongs to the flavin monoamine oxidase family. In terms of assembly, monomer, homo- or heterodimer (containing two subunits of similar size). Each subunit contains a covalently bound flavin. Enzymatically active as monomer. Requires FAD as cofactor.

The protein resides in the mitochondrion outer membrane. The enzyme catalyses a secondary aliphatic amine + O2 + H2O = a primary amine + an aldehyde + H2O2. It catalyses the reaction a primary methyl amine + O2 + H2O = an aldehyde + H2O2 + NH4(+). The catalysed reaction is (R)-adrenaline + O2 + H2O = (R)-3,4-dihydroxymandelaldehyde + methylamine + H2O2. It carries out the reaction dopamine + O2 + H2O = 3,4-dihydroxyphenylacetaldehyde + H2O2 + NH4(+). The enzyme catalyses tyramine + O2 + H2O = (4-hydroxyphenyl)acetaldehyde + H2O2 + NH4(+). It catalyses the reaction (R)-noradrenaline + O2 + H2O = (R)-3,4-dihydroxymandelaldehyde + H2O2 + NH4(+). The catalysed reaction is serotonin + O2 + H2O = (5-hydroxyindol-3-yl)acetaldehyde + H2O2 + NH4(+). It carries out the reaction kynuramine + O2 + H2O = 3-(2-aminophenyl)-3-oxopropanal + H2O2 + NH4(+). The enzyme catalyses tryptamine + O2 + H2O = indole-3-acetaldehyde + H2O2 + NH4(+). It catalyses the reaction 2-phenylethylamine + O2 + H2O = 2-phenylacetaldehyde + H2O2 + NH4(+). Catalyzes the oxidative deamination of primary and some secondary amine such as neurotransmitters, with concomitant reduction of oxygen to hydrogen peroxide and has important functions in the metabolism of neuroactive and vasoactive amines in the central nervous system and peripheral tissues. Preferentially oxidizes serotonin. Also catalyzes the oxidative deamination of kynuramine to 3-(2-aminophenyl)-3-oxopropanal that can spontaneously condense to 4-hydroxyquinoline. The sequence is that of Amine oxidase [flavin-containing] A from Canis lupus familiaris (Dog).